Here is a 984-residue protein sequence, read N- to C-terminus: Vacuolar sorting protein 3 (984 aa).

One can recognise a CNH domain in the interval 21 to 339; that stretch reads KIRALSLSPI…GCGPSLLAAD (319 aa). The CHCR repeat unit spans residues 663 to 844; the sequence is VLTSDKRTEE…YLDPQNGKEP (182 aa).

It belongs to the TRAP1 family. Component of the class C core vacuole/endosome tethering (CORVET) complex. Their common core is composed of the class C Vps core proteins VPS11, VCL1, VPS18 and VPS33, which in CORVET further associates with VPS3. Interacts directly with VPS11. Binds to RABF2A and RABF2B.

Its subcellular location is the endosome membrane. The protein resides in the cytoplasm. Essential protein required during embryogenesis. Believed to act as a component of the putative class C core vacuole/endosome tethering (CORVET) endosomal tethering complexes. CORVET is required for vacuolar transport of SYP22. Involved in root development. Plays a role in vesicle-mediated protein trafficking of the endocytic membrane transport pathway. The protein is Vacuolar sorting protein 3 of Arabidopsis thaliana (Mouse-ear cress).